The primary structure comprises 353 residues: Peroxisome assembly protein 12-B (353 aa).

Over 1–19 (MAERGAHITTTSPLDDRPS) the chain is Peroxisomal matrix. The helical transmembrane segment at 20–47 (IFEVVAQESLMAAARPALHHIVKVLAES) threads the bilayer. Residues 48–51 (NPAR) are Cytoplasmic-facing. A helical membrane pass occupies residues 52 to 76 (YGTLWRWFDELYTLLECLLQQHYLS). The Peroxisomal matrix segment spans residues 77 to 104 (WASASFSENFYGLKRVTLGKQVGQRNLA). The chain crosses the membrane as a helical span at residues 105–134 (RKEYWKSLLLLVLIPYLRIKLEKLVNSLRE). The Cytoplasmic portion of the chain corresponds to 135–139 (EEDYS). The helical transmembrane segment at 140-178 (IQNPTSFHKRCYKAILASYPFLKLGWEAWFLFYQLRYIL) threads the bilayer. At 179 to 243 (WNGKHHSPLL…LGAVTLSVSS (65 aa)) the chain is on the peroxisomal matrix side. The helical transmembrane segment at 244–271 (SLSLGVFFLQFLDWWYSAENRETLKSLG) threads the bilayer. Topologically, residues 272–353 (NLPVPPPPIH…HLIKLYTPDG (82 aa)) are cytoplasmic. Zn(2+)-binding residues include Cys-298, Cys-301, Cys-319, and Cys-322. The RING-type; degenerate zinc finger occupies 298-337 (CPLCRKVRVNDTALGTSGYVFCYRCAYYYVKTHQRCPVSG).

This sequence belongs to the pex2/pex10/pex12 family. As to quaternary structure, component of the PEX2-PEX10-PEX12 retrotranslocation channel.

The protein localises to the peroxisome membrane. Its pathway is protein modification; protein ubiquitination. Its function is as follows. Component of a retrotranslocation channel required for peroxisome organization by mediating export of the PEX5 receptor from peroxisomes to the cytosol, thereby promoting PEX5 recycling. The retrotranslocation channel is composed of PEX2, PEX10 and PEX12; each subunit contributing transmembrane segments that coassemble into an open channel that specifically allows the passage of PEX5 through the peroxisomal membrane. PEX12 also regulates PEX5 recycling by activating the E3 ubiquitin-protein ligase activity of PEX10. When PEX5 recycling is compromised, PEX12 stimulates PEX10-mediated polyubiquitination of PEX5, leading to its subsequent degradation. In Xenopus laevis (African clawed frog), this protein is Peroxisome assembly protein 12-B.